The chain runs to 149 residues: Protein SprT-like (149 aa).

A SprT-like domain is found at 4-143 (TDYVKQVSLE…CGLCRGKLLL (140 aa)). Zn(2+) is bound at residue H64. Residue E65 is part of the active site. Zn(2+) is bound at residue H68.

It belongs to the SprT family. Zn(2+) serves as cofactor.

The protein localises to the cytoplasm. The chain is Protein SprT-like from Streptococcus pneumoniae (strain JJA).